A 155-amino-acid polypeptide reads, in one-letter code: Non-secretory ribonuclease (155 aa).

The signal sequence occupies residues 1–25 (MGPKLLESRLCLLLLLGLVLMLASC). Lys-33 is a binding site for substrate. Residue His-38 is the Proton acceptor of the active site. An N-linked (GlcNAc...) asparagine glycan is attached at Asn-41. 4 cysteine pairs are disulfide-bonded: Cys-47-Cys-106, Cys-61-Cys-118, Cys-79-Cys-133, and Cys-86-Cys-94. A 3'-nitrotyrosine modification is found at Tyr-57. Position 62 to 66 (62 to 66 (KDINT)) interacts with substrate. Residues Asn-83, Asn-88, and Asn-107 are each glycosylated (N-linked (GlcNAc...) asparagine). His-150 serves as the catalytic Proton donor.

The protein belongs to the pancreatic ribonuclease family. As to quaternary structure, interacts with and forms a tight 1:1 complex with RNH1. Dimerization of two such complexes may occur.

It is found in the lysosome. It localises to the cytoplasmic granule. It carries out the reaction an [RNA] containing cytidine + H2O = an [RNA]-3'-cytidine-3'-phosphate + a 5'-hydroxy-ribonucleotide-3'-[RNA].. The enzyme catalyses an [RNA] containing uridine + H2O = an [RNA]-3'-uridine-3'-phosphate + a 5'-hydroxy-ribonucleotide-3'-[RNA].. This is a non-secretory ribonuclease. It is a pyrimidine specific nuclease with a slight preference for U. Cytotoxin and helminthotoxin. Possesses a wide variety of biological activities. In Mus musculus (Mouse), this protein is Non-secretory ribonuclease (Rnase2).